We begin with the raw amino-acid sequence, 364 residues long: Mannose-1-phosphate guanyltransferase (364 aa).

Belongs to the transferase hexapeptide repeat family.

The protein resides in the cytoplasm. The catalysed reaction is alpha-D-mannose 1-phosphate + GTP + H(+) = GDP-alpha-D-mannose + diphosphate. It participates in nucleotide-sugar biosynthesis; GDP-alpha-D-mannose biosynthesis; GDP-alpha-D-mannose from alpha-D-mannose 1-phosphate (GTP route): step 1/1. Its function is as follows. Involved in cell wall synthesis where it is required for glycosylation. Involved in cell cycle progression through cell-size checkpoint. The protein is Mannose-1-phosphate guanyltransferase (mpg1) of Emericella nidulans (strain FGSC A4 / ATCC 38163 / CBS 112.46 / NRRL 194 / M139) (Aspergillus nidulans).